The sequence spans 185 residues: Large ribosomal subunit protein uL5 (185 aa).

The protein belongs to the universal ribosomal protein uL5 family. As to quaternary structure, part of the 50S ribosomal subunit; part of the 5S rRNA/L5/L18/L25 subcomplex. Contacts the 5S rRNA and the P site tRNA. Forms a bridge to the 30S subunit in the 70S ribosome.

In terms of biological role, this is one of the proteins that bind and probably mediate the attachment of the 5S RNA into the large ribosomal subunit, where it forms part of the central protuberance. In the 70S ribosome it contacts protein S13 of the 30S subunit (bridge B1b), connecting the 2 subunits; this bridge is implicated in subunit movement. Contacts the P site tRNA; the 5S rRNA and some of its associated proteins might help stabilize positioning of ribosome-bound tRNAs. This is Large ribosomal subunit protein uL5 from Rhodopseudomonas palustris (strain BisB18).